Reading from the N-terminus, the 415-residue chain is Corticotropin-releasing factor receptor 1 (415 aa).

Residues 1–23 form the signal peptide; sequence MGRRPQLRLVKALLLLGLNPVST. At 24–111 the chain is on the extracellular side; that stretch reads SLQDQRCENL…CQEILNEEKK (88 aa). Intrachain disulfides connect Cys30–Cys54, Cys44–Cys87, and Cys68–Cys102. Residues Asn38, Asn45, Asn78, Asn90, and Asn98 are each glycosylated (N-linked (GlcNAc...) asparagine). The interval 99–108 is important for peptide agonist binding; the sequence is YSECQEILNE. Residues 112-142 form a helical membrane-spanning segment; sequence SKVHYHVAVIINYLGHCISLVALLVAFVLFL. Residues 143–149 lie on the Cytoplasmic side of the membrane; that stretch reads RLRSIRC. Residues 150–174 traverse the membrane as a helical segment; sequence LRNIIHWNLISAFILRNATWFVVQL. The Extracellular portion of the chain corresponds to 175-189; it reads TVSPEVHQSNVAWCR. The cysteines at positions 188 and 258 are disulfide-linked. A helical membrane pass occupies residues 190–218; it reads LVTAAYNYFHVTNFFWMFGEGCYLHTAIV. Residues 219-225 are Cytoplasmic-facing; sequence LTYSTDR. The helical transmembrane segment at 226–253 threads the bilayer; it reads LRKWMFVCIGWGVPFPIIVAWAIGKLHY. Residues 254–269 are Extracellular-facing; the sequence is DNEKCWFGKRPGVYTD. A helical membrane pass occupies residues 270–295; it reads YIYQGPMILVLLINFIFLFNIVRILM. Residues 280–290 form an important for antagonist binding region; sequence LLINFIFLFNI. Topologically, residues 296–306 are cytoplasmic; it reads TKLRASTTSET. At Ser301 the chain carries Phosphoserine; by PKA. The chain crosses the membrane as a helical span at residues 307 to 331; it reads IQYRKAVKATLVLLPLLGITYMLFF. At 332–338 the chain is on the extracellular side; it reads VNPGEDE. The chain crosses the membrane as a helical span at residues 339 to 368; that stretch reads VSRVVFIYFNSFLESFQGFFVSVFYCFLNS. At 369–415 the chain is on the cytoplasmic side; the sequence is EVRSAIRKRWRRWQDKHSIRARVARAMSIPTSPTRVSFHSIKQSTAV.

It belongs to the G-protein coupled receptor 2 family. As to quaternary structure, interacts (via N-terminal extracellular domain) with CRH and UCN. Interacts with DLG1; this inhibits endocytosis of CRHR1 after agonist binding. Heterodimer; heterodimerizes with GPER1. C-terminal Ser or Thr residues may be phosphorylated. In terms of processing, phosphorylation at Ser-301 by PKA prevents maximal coupling to Gq-protein, and thereby negatively regulates downstream signaling. In terms of tissue distribution, detected in brain, especially in cerebellum. Detected in pituitary gland, and at lower levels in the olfactory bulb.

Its subcellular location is the cell membrane. The protein resides in the endosome. G-protein coupled receptor for CRH (corticotropin-releasing factor) and UCN (urocortin). Has high affinity for CRH and UCN. Ligand binding causes a conformation change that triggers signaling via guanine nucleotide-binding proteins (G proteins) and down-stream effectors, such as adenylate cyclase. Promotes the activation of adenylate cyclase, leading to increased intracellular cAMP levels. Inhibits the activity of the calcium channel CACNA1H. Required for normal embryonic development of the adrenal gland and for normal hormonal responses to stress. Plays a role in the response to anxiogenic stimuli. This chain is Corticotropin-releasing factor receptor 1 (Crhr1), found in Rattus norvegicus (Rat).